We begin with the raw amino-acid sequence, 557 residues long: MAPSNIVVQSSSTPPVAGGDEEFAPSVWGDFFVTYAPPVSQASEQRMSERAELLKAQVCQAFDAASMDVAGLVTYVDTLERLGLDNHFRDLIGAALERIGAEELPEHGGGLHIVALRFRLLRQHGIWVSTDVFDAFREDAGGFCSSLCSDDPRGLLSLYNAAHMAVPGEVVLDDAIAFARGRLLDIISKGEVRSPVSEQITRALDIPLPRFTRRLETMHYIAEYEHEEAHDGLLLELARLNFVLVRALHLRELKDLSLWWRELYNTVKLPYARDRMVEIYFWTCGMLHEEEYSLARMFFAKTFGMVSLMDDTFDVHATLDECHKLKEAMQRWDESEVSILPEYLRLLYIKTLSNFKEFEEILEPNKKYRMAYTKEAYKLCSKNYLKEAIWSNQKYQPSFKEHEELSIMTSGLPMLTILTLMGFGDEATPEAFEWVSSVPEMVRAGSQVTRFLNDLSSYKLGKNKKDMPGSVETYMVENGLTGDEAAAAIAALLENRWRILNQTRMEIDHTLLPAVQVVVNMARANEIIYLHGRDAYTFGADLKDLVTTLFLKQVLPL.

Asp-310 and Asp-314 together coordinate Mg(2+). Substrate-binding residues include Asp-310, Asp-314, and Arg-450. The DDXXD motif motif lies at 310–314 (DDTFD). Mg(2+) is bound by residues Asn-453 and Ser-457.

It belongs to the terpene synthase family. In terms of assembly, monomer. Mg(2+) serves as cofactor. Mn(2+) is required as a cofactor.

The protein localises to the cytoplasm. The catalysed reaction is (2E,6E)-farnesyl diphosphate + 2 H2O = 7-epi-ent-eudesmane-5,11-diol + diphosphate. Its pathway is secondary metabolite biosynthesis; terpenoid biosynthesis. In terms of biological role, component of the volatile terpenes biosynthesis pathways. Dihydroxylated sesquiterpenoid synthase that generates dually hydroxylated products directly from (E,E)-farnesyl diphosphate, primarily eudesmane-2,11-diol, along with two closely related structural isomers. This chain is Eudesmanediol synthase, found in Zea mays (Maize).